A 158-amino-acid polypeptide reads, in one-letter code: Small ribosomal subunit protein uS7 (158 aa).

This sequence belongs to the universal ribosomal protein uS7 family. In terms of assembly, part of the 30S ribosomal subunit. Contacts proteins S9 and S11.

One of the primary rRNA binding proteins, it binds directly to 16S rRNA where it nucleates assembly of the head domain of the 30S subunit. Is located at the subunit interface close to the decoding center, probably blocks exit of the E-site tRNA. This is Small ribosomal subunit protein uS7 from Porphyromonas gingivalis (strain ATCC BAA-308 / W83).